The sequence spans 874 residues: Endothelial PAS domain-containing protein 1 (874 aa).

The segment at 1-23 (MTADKEKKRSSSELRKEKSRDAA) is disordered. Positions 14 to 67 (LRKEKSRDAARCRRSKETEVFYELAHELPLPHSVSSHLDKASIMRLAISFLRTH) constitute a bHLH domain. Residues 26–53 (RRSKETEVFYELAHELPLPHSVSSHLDK) form a DNA-binding region. The region spanning 84–154 (DQQMDNLYLK…ENLTLKNGSG (71 aa)) is the PAS 1 domain. Positions 171–192 (RMKCTVTNRGRTVNLKSATWKV) are required for heterodimer formation with ARNT. Residues 230 to 300 (QHPSHMDIPL…KSHQNLCTKG (71 aa)) form the PAS 2 domain. Residues 304-347 (SGQYRMLAKHGGYVWLETQGTVIYNPRNLQPQCIMCVNYVLSEI) enclose the PAC domain. Proline 405 bears the 4-hydroxyproline mark. A disordered region spans residues 438-489 (WVSGLRSHSAQSESGSLPAFTVPQADTPGNTTPSASSSSSCSTPSSPEDYYS). The segment covering 443 to 452 (RSHSAQSESG) has biased composition (polar residues). The segment covering 464 to 484 (TPGNTTPSASSSSSCSTPSSP) has biased composition (low complexity). The NTAD stretch occupies residues 495–541 (LKIEVIEKLFAMDTEPRDPGSTQTDFSELDLETLAPYIPMDGEDFQL). Proline 530 carries the post-translational modification 4-hydroxyproline. Residues 777-803 (LGQPLRHLPPPQPPSTRSSGENAKTGF) are disordered. The segment at 834 to 874 (SFEPYLLPELTRYDCEVNVPVPGSSTLLQGRDLLRALDQAT) is CTAD. Threonine 844 bears the Phosphothreonine mark. A (3S)-3-hydroxyasparagine modification is found at asparagine 851.

In terms of assembly, interacts with HIF3A isoform 2. Efficient DNA binding requires dimerization with another bHLH protein. Heterodimerizes with ARNT; heterodimer binds to core DNA sequence 5'-TACGTG-3' within the hypoxia response element (HRE) of target gene promoters. Interacts with CREBBP. Interacts with EGLN1. Interacts with VHL. In normoxia, is probably hydroxylated on Pro-405 and Pro-530 by EGLN1/PHD1, EGLN2/PHD2 and/or EGLN3/PHD3. The hydroxylated prolines promote interaction with VHL, initiating rapid ubiquitination and subsequent proteasomal degradation. Under hypoxia, proline hydroxylation is impaired and ubiquitination is attenuated, resulting in stabilization. Post-translationally, in normoxia, is hydroxylated on Asn-851 by HIF1AN thus probably abrogating interaction with CREBBP and EP300 and preventing transcriptional activation. In terms of processing, phosphorylated on multiple sites in the CTAD. The iron and 2-oxoglutarate dependent 3-hydroxylation of asparagine is (S) stereospecific within HIF CTAD domains. As to expression, expressed in most tissues, with highest levels in lung, followed by heart, kidney, brain and liver. Predominantly expressed in endothelial cells. Also found in smooth muscle cells of the uterus, neurons, and brown adipose tissue. High expression in embryonic choroid plexus and kidney glomeruli.

The protein localises to the nucleus. It is found in the nucleus speckle. In terms of biological role, transcription factor involved in the induction of oxygen regulated genes. Heterodimerizes with ARNT; heterodimer binds to core DNA sequence 5'-TACGTG-3' within the hypoxia response element (HRE) of target gene promoters. Regulates the vascular endothelial growth factor (VEGF) expression and seems to be implicated in the development of blood vessels and the tubular system of lung. May also play a role in the formation of the endothelium that gives rise to the blood brain barrier. Potent activator of the Tie-2 tyrosine kinase expression. Activation requires recruitment of transcriptional coactivators such as CREBBP and probably EP300. Interaction with redox regulatory protein APEX seems to activate CTAD. This chain is Endothelial PAS domain-containing protein 1 (Epas1), found in Mus musculus (Mouse).